The following is a 464-amino-acid chain: MNVFGITELKNPVKEKIEFKEPFELFKSIYSEYDSSFLLESMESDTGLARYSFMGFEPQMIIRARSGFIEVEYEGSREEFDTENPFEFLRQFTRPAGKSRGFCGGLVGYISYQAARFFDSINLSPGNFPDFEFGLFLDGIMFNHLTGECSYISLKENRLPEISELLREETPTGHLKYRSMGTLFSRRRYLGMVEEARERIAEGEIFQAVLSNATDYRLRGDRLALYEALRRVNPSPYMYHLKLGSREITGSSPEMLVRVEDKQIETFPIAGTRPRGKTPHEDERIAAELLSDEKELAEHLMLVDLARNDLGRISEFGTVQVPEYMTIRRFSHVQHILSHVTGRLRKGMDALDALGAVFPAGTVSGAPKIRAMEIIESLEGVPRNAYAGALGYLSLNGNADFAITIRSMVAEGAYGRIQAGAGIVHDSVPEREYVECQNKAMAVLKSMELAGDGFDSDEPFIARR.

Residues Ser41 and 236–238 (PYM) contribute to the L-tryptophan site. Position 271–272 (271–272 (GT)) interacts with chorismate. Glu298 serves as a coordination point for Mg(2+). Chorismate is bound by residues Tyr386, Arg406, 420–422 (GAG), and Gly422. Glu435 serves as a coordination point for Mg(2+).

The protein belongs to the anthranilate synthase component I family. In terms of assembly, heterotetramer consisting of two non-identical subunits: a beta subunit (TrpG) and a large alpha subunit (TrpE). The cofactor is Mg(2+).

It carries out the reaction chorismate + L-glutamine = anthranilate + pyruvate + L-glutamate + H(+). It participates in amino-acid biosynthesis; L-tryptophan biosynthesis; L-tryptophan from chorismate: step 1/5. Feedback inhibited by tryptophan. Part of a heterotetrameric complex that catalyzes the two-step biosynthesis of anthranilate, an intermediate in the biosynthesis of L-tryptophan. In the first step, the glutamine-binding beta subunit (TrpG) of anthranilate synthase (AS) provides the glutamine amidotransferase activity which generates ammonia as a substrate that, along with chorismate, is used in the second step, catalyzed by the large alpha subunit of AS (TrpE) to produce anthranilate. In the absence of TrpG, TrpE can synthesize anthranilate directly from chorismate and high concentrations of ammonia. This Methanothermobacter thermautotrophicus (strain ATCC 29096 / DSM 1053 / JCM 10044 / NBRC 100330 / Delta H) (Methanobacterium thermoautotrophicum) protein is Anthranilate synthase component 1 (trpE).